The primary structure comprises 436 residues: Hydrogenobyrinate a,c-diamide synthase (436 aa).

In terms of domain architecture, GATase cobBQ-type spans H244–K435. C327 (nucleophile) is an active-site residue.

The protein belongs to the CobB/CbiA family. The cofactor is Mg(2+).

It catalyses the reaction hydrogenobyrinate + 2 L-glutamine + 2 ATP + 2 H2O = hydrogenobyrinate a,c-diamide + 2 L-glutamate + 2 ADP + 2 phosphate + 2 H(+). The protein operates within cofactor biosynthesis; adenosylcobalamin biosynthesis; cob(II)yrinate a,c-diamide from precorrin-2 (aerobic route): step 9/10. Its function is as follows. Catalyzes the ATP-dependent amidation of the two carboxylate groups at positions a and c of hydrogenobyrinate, using either L-glutamine or ammonia as the nitrogen source. The protein is Hydrogenobyrinate a,c-diamide synthase of Brucella anthropi (strain ATCC 49188 / DSM 6882 / CCUG 24695 / JCM 21032 / LMG 3331 / NBRC 15819 / NCTC 12168 / Alc 37) (Ochrobactrum anthropi).